We begin with the raw amino-acid sequence, 1107 residues long: Enolase-phosphatase E1 (1107 aa).

Asp19 and Glu21 together coordinate Mg(2+). Substrate is bound by residues 152-153 and Lys186; that span reads SS. Asp211 contacts Mg(2+). The interval 258-1107 is disordered; the sequence is SVKSTETENG…SATPSVETES (850 aa). Basic and acidic residues predominate over residues 260 to 289; the sequence is KSTETENGAEKETVTESTEKVADESEKETE. Residues 291–306 are compositionally biased toward low complexity; sequence ETAAAETENGAEAENG. Residues 366-376 show a composition bias toward acidic residues; sequence DAMDVDAEMTD. 2 stretches are compositionally biased toward basic and acidic residues: residues 393–427 and 435–462; these read VTEK…DTKQ and GEDK…KEEE. The span at 475 to 485 shows a compositional bias: acidic residues; that stretch reads DKMDVDEEDSA. 6 stretches are compositionally biased toward basic and acidic residues: residues 486-512, 534-548, 572-586, 593-604, 610-686, and 693-776; these read VIEK…KEEN, DETK…KEES, TVEK…SKSE, TSEKKVEDKSAN, KEPK…EVKA, and DESK…KSVD. Over residues 794–803 the composition is skewed to low complexity; it reads EETSATTEAQ. Basic and acidic residues-rich tracts occupy residues 804 to 838 and 849 to 908; these read ATKE…DAKS and KEMK…ETKG. A compositionally biased stretch (low complexity) spans 909–919; that stretch reads VEATTAGPVEE. The segment covering 920-935 has biased composition (acidic residues); sequence VAVEATEEDVAMEAES. 3 stretches are compositionally biased toward basic and acidic residues: residues 937 to 957, 1001 to 1028, and 1035 to 1047; these read DAVK…KLDS, DEVK…EADS, and NHDE…KEND. The segment covering 1048 to 1083 has biased composition (low complexity); sequence TSASNIEEASSATTTTTNGTSTESDSSSTTPSSETV.

The protein belongs to the HAD-like hydrolase superfamily. MasA/MtnC family. In terms of assembly, monomer. Requires Mg(2+) as cofactor.

The protein localises to the cytoplasm. It localises to the nucleus. The enzyme catalyses 5-methylsulfanyl-2,3-dioxopentyl phosphate + H2O = 1,2-dihydroxy-5-(methylsulfanyl)pent-1-en-3-one + phosphate. Its pathway is amino-acid biosynthesis; L-methionine biosynthesis via salvage pathway; L-methionine from S-methyl-5-thio-alpha-D-ribose 1-phosphate: step 3/6. The protein operates within amino-acid biosynthesis; L-methionine biosynthesis via salvage pathway; L-methionine from S-methyl-5-thio-alpha-D-ribose 1-phosphate: step 4/6. Its function is as follows. Bifunctional enzyme that catalyzes the enolization of 2,3-diketo-5-methylthiopentyl-1-phosphate (DK-MTP-1-P) into the intermediate 2-hydroxy-3-keto-5-methylthiopentenyl-1-phosphate (HK-MTPenyl-1-P), which is then dephosphorylated to form the acireductone 1,2-dihydroxy-3-keto-5-methylthiopentene (DHK-MTPene). In Aedes aegypti (Yellowfever mosquito), this protein is Enolase-phosphatase E1.